The primary structure comprises 93 residues: YcgL domain-containing protein KPN78578_22820 (93 aa).

Positions 1 to 85 constitute a YcgL domain; the sequence is MFCVIYRSTK…PSENLLKKHL (85 aa).

The protein is YcgL domain-containing protein KPN78578_22820 of Klebsiella pneumoniae subsp. pneumoniae (strain ATCC 700721 / MGH 78578).